Here is a 172-residue protein sequence, read N- to C-terminus: Ribosome maturation factor RimM (172 aa).

The region spanning 95–168 (AEGEFYYHQI…RVDVEIMEGL (74 aa)) is the PRC barrel domain.

The protein belongs to the RimM family. Binds ribosomal protein uS19.

It localises to the cytoplasm. Its function is as follows. An accessory protein needed during the final step in the assembly of 30S ribosomal subunit, possibly for assembly of the head region. Essential for efficient processing of 16S rRNA. May be needed both before and after RbfA during the maturation of 16S rRNA. It has affinity for free ribosomal 30S subunits but not for 70S ribosomes. The protein is Ribosome maturation factor RimM of Streptococcus equi subsp. equi (strain 4047).